Reading from the N-terminus, the 103-residue chain is Small ribosomal subunit protein uS10 (103 aa).

This sequence belongs to the universal ribosomal protein uS10 family. Part of the 30S ribosomal subunit.

Functionally, involved in the binding of tRNA to the ribosomes. This chain is Small ribosomal subunit protein uS10, found in Aliivibrio fischeri (strain ATCC 700601 / ES114) (Vibrio fischeri).